The sequence spans 265 residues: Glutamate racemase (265 aa).

Substrate is bound by residues aspartate 12–serine 13 and tyrosine 44–glycine 45. Cysteine 75 functions as the Proton donor/acceptor in the catalytic mechanism. Asparagine 76 to threonine 77 contacts substrate. Cysteine 183 (proton donor/acceptor) is an active-site residue. Threonine 184–histidine 185 is a binding site for substrate.

This sequence belongs to the aspartate/glutamate racemases family.

It catalyses the reaction L-glutamate = D-glutamate. Its pathway is cell wall biogenesis; peptidoglycan biosynthesis. Its function is as follows. Provides the (R)-glutamate required for cell wall biosynthesis. In Carboxydothermus hydrogenoformans (strain ATCC BAA-161 / DSM 6008 / Z-2901), this protein is Glutamate racemase.